The primary structure comprises 287 residues: Thymidylate synthase (287 aa).

Position 21 (Arg21) interacts with dUMP. Residue Asn51 participates in (6R)-5,10-methylene-5,6,7,8-tetrahydrofolate binding. 150–151 (RR) is a dUMP binding site. The Nucleophile role is filled by Cys170. Residues 190-193 (RSGD), Asn201, and 231-233 (HIY) each bind dUMP. A (6R)-5,10-methylene-5,6,7,8-tetrahydrofolate-binding site is contributed by Asp193. Ala286 provides a ligand contact to (6R)-5,10-methylene-5,6,7,8-tetrahydrofolate.

It belongs to the thymidylate synthase family. Bacterial-type ThyA subfamily. Homodimer.

The protein resides in the cytoplasm. It carries out the reaction dUMP + (6R)-5,10-methylene-5,6,7,8-tetrahydrofolate = 7,8-dihydrofolate + dTMP. The protein operates within pyrimidine metabolism; dTTP biosynthesis. In terms of biological role, catalyzes the reductive methylation of 2'-deoxyuridine-5'-monophosphate (dUMP) to 2'-deoxythymidine-5'-monophosphate (dTMP) while utilizing 5,10-methylenetetrahydrofolate (mTHF) as the methyl donor and reductant in the reaction, yielding dihydrofolate (DHF) as a by-product. This enzymatic reaction provides an intracellular de novo source of dTMP, an essential precursor for DNA biosynthesis. This chain is Thymidylate synthase, found in Mycoplasma genitalium (strain ATCC 33530 / DSM 19775 / NCTC 10195 / G37) (Mycoplasmoides genitalium).